Consider the following 234-residue polypeptide: Leucyl/phenylalanyl-tRNA--protein transferase (234 aa).

It belongs to the L/F-transferase family.

The protein resides in the cytoplasm. It catalyses the reaction N-terminal L-lysyl-[protein] + L-leucyl-tRNA(Leu) = N-terminal L-leucyl-L-lysyl-[protein] + tRNA(Leu) + H(+). The enzyme catalyses N-terminal L-arginyl-[protein] + L-leucyl-tRNA(Leu) = N-terminal L-leucyl-L-arginyl-[protein] + tRNA(Leu) + H(+). The catalysed reaction is L-phenylalanyl-tRNA(Phe) + an N-terminal L-alpha-aminoacyl-[protein] = an N-terminal L-phenylalanyl-L-alpha-aminoacyl-[protein] + tRNA(Phe). Functionally, functions in the N-end rule pathway of protein degradation where it conjugates Leu, Phe and, less efficiently, Met from aminoacyl-tRNAs to the N-termini of proteins containing an N-terminal arginine or lysine. The polypeptide is Leucyl/phenylalanyl-tRNA--protein transferase (Salmonella paratyphi A (strain ATCC 9150 / SARB42)).